We begin with the raw amino-acid sequence, 1056 residues long: Ribosomal protein S6 kinase delta-1 (1056 aa).

Residues 8–132 (SADLARFYTV…DFFKGGVISD (125 aa)) form the PX domain. The interval 204-223 (VGAVASDSEPSRVEDRESRS) is disordered. Residues 212 to 222 (EPSRVEDRESR) are compositionally biased toward basic and acidic residues. The 29-residue stretch at 276–304 (VQGESSPTRREAVKRRTAEYLMRAESICS) folds into the MIT domain. Ser-281, Ser-422, Ser-423, Ser-426, Ser-446, Ser-448, and Ser-454 each carry phosphoserine. The 102-residue stretch at 343–444 (GVIDKVLLVM…SMPPRVCLQQ (102 aa)) folds into the Protein kinase 1 domain. The disordered stretch occupies residues 426–504 (SLDIKEGRPS…KWLDSGSSSE (79 aa)). The segment covering 443-454 (QQPSASPQGGSS) has biased composition (low complexity). Residues 473 to 482 (TSLTPSSQDD) show a composition bias toward polar residues. Phosphoserine is present on residues Ser-493 and Ser-527. The disordered stretch occupies residues 529 to 588 (SEESVMQPEGDKADTQAVSSPASLATGSVSPSTHLRVFSGGEDLEAVSSPPTSESLSRSK). Residues 544–561 (QAVSSPASLATGSVSPST) show a composition bias toward polar residues. A compositionally biased stretch (low complexity) spans 576–587 (SSPPTSESLSRS). A phosphoserine mark is found at Ser-577, Ser-599, Ser-602, Ser-634, Ser-655, Ser-658, Ser-661, and Ser-787. The tract at residues 628–662 (TLEDGDSPSQSLDPGESKRESEAQDSVSRGSDDSV) is disordered. The 258-residue stretch at 789–1046 (RSESDRLGQV…VEDIKSHPFF (258 aa)) folds into the Protein kinase 2 domain. ATP is bound by residues 795-803 (LGQVEVVVT) and Lys-823. Asp-919 serves as the catalytic Proton acceptor.

Belongs to the protein kinase superfamily. Ser/Thr protein kinase family. S6 kinase subfamily. In terms of assembly, interacts with SPHK1 and phosphatidylinositol 3-phosphate. Interacts (via PX domain) with PRDX3.

The protein localises to the cytoplasm. It localises to the membrane. The protein resides in the early endosome. It carries out the reaction L-seryl-[protein] + ATP = O-phospho-L-seryl-[protein] + ADP + H(+). The catalysed reaction is L-threonyl-[protein] + ATP = O-phospho-L-threonyl-[protein] + ADP + H(+). May be involved in transmitting sphingosine-1 phosphate (SPP)-mediated signaling into the cell. Plays a role in the recruitment of PRDX3 to early endosomes. This chain is Ribosomal protein S6 kinase delta-1 (Rps6kc1), found in Mus musculus (Mouse).